The following is a 548-amino-acid chain: Frizzled-7-B (548 aa).

Residues 1 to 18 (MLAPVSLLFCLFLQLCPS) form the signal peptide. Over 19–230 (AQQYHGEKGI…EEEVRFARLW (212 aa)) the chain is Extracellular. The FZ domain occupies 31-150 (PDHGFCQPIS…HGAGEICVGQ (120 aa)). Disulfide bonds link Cys36-Cys97, Cys44-Cys90, Cys81-Cys118, Cys107-Cys147, and Cys111-Cys135. N-linked (GlcNAc...) asparagine glycosylation is present at Asn50. An N-linked (GlcNAc...) asparagine glycan is attached at Asn151. Residues 231–251 (VGIWAILCGISTLFTVLTYLV) form a helical membrane-spanning segment. Topologically, residues 252–262 (DMRRFSYPERP) are cytoplasmic. The helical transmembrane segment at 263–283 (IIFLSGCYFMVAVAYTAGFLL) threads the bilayer. Topologically, residues 284-311 (EERAVCVERFSEDSYRTVAQGTKKEGCT) are extracellular. A helical transmembrane segment spans residues 312 to 332 (ILFMILYFFGMASSIWWVILA). Residues 333-353 (LTWFLSAGMKWGHEAIEANSQ) lie on the Cytoplasmic side of the membrane. A helical membrane pass occupies residues 354 to 374 (YFHLAAWAVPAVKTITILAMG). At 375-397 (QVDGDVLSGVCYVGINSVDSLRG) the chain is on the extracellular side. A helical transmembrane segment spans residues 398 to 418 (FVLAPLFVYLFLGTSFLLAGF). Residues 419-444 (VSLFRIRTIMKHDGTKTEKLEKLMVR) lie on the Cytoplasmic side of the membrane. Residues 445–465 (IGVFSVMYTVPATIVLACYFY) form a helical membrane-spanning segment. Topologically, residues 466 to 502 (EQAFRDTWEKTWLVHTCKGYAVPCPNYNFAPMSPDFT) are extracellular. A helical membrane pass occupies residues 503–523 (VFMIKYLMTMIVGITSSFWIW). The Cytoplasmic segment spans residues 524 to 548 (SGKTLQSWRRFYHRLGNGSKGETAV). A Lys-Thr-X-X-X-Trp motif, mediates interaction with the PDZ domain of Dvl family members motif is present at residues 526-531 (KTLQSW). Positions 546 to 548 (TAV) match the PDZ-binding motif.

This sequence belongs to the G-protein coupled receptor Fz/Smo family. Interacts with wnt11 and sdc4. The extracellular domain interacts with the extracellular domain of pcdh8/papc. Interacts (via C-terminus) with dvl1 (via PDZ domain). During gastrulation, broadly expressed on the dorsal side of the embryo in deep mesodermal cells surrounding the blastopore lip and in presumptive anterior neuroectoderm. During neurulation, localized to the cranial neural crest and heart field where expression is retained at later stages in addition to new areas of expression in the neural tube, pronephros and tailbud. At tailbud stage, expressed in the pronephric duct, and broad head expression becomes more restricted to the hindbrain. In tadpoles, strongly expressed in the eye and the pericardium and myocardium of the developing heart.

It is found in the cell membrane. The protein localises to the endosome membrane. Receptor for Wnt proteins. Acts in both canonical and non-canonical Wnt pathways. Although different papers report differing Wnt preferences, wnt5a, wnt8b and wnt11 have been proposed as synergists. In the canonical Wnt pathway, acts via beta-catenin to promote the expression of the dorsal genes siamois, twin and nodal3 and to establish the dorsal axis of the embryo and induce dorsal mesoderm formation. In a non-canonical Wnt/planar cell polarity (PCP) pathway, acts with sdc4 and dvl2/dsh to regulate convergent extension cell movements during gastrulation. Triggers phosphorylation of dvl2/dsh and its translocation to the plasma membrane. In a third branch of Wnt signaling, acts in a non-canonical pathway via trimeric G proteins, and independently of dvl2/dsh, to recruit protein kinase C (PKC) to the membrane and thus activate PKC. PKC signaling controls cell sorting and tissue separation during gastrulation. In Xenopus laevis (African clawed frog), this protein is Frizzled-7-B (fzd7-b).